Consider the following 398-residue polypeptide: Elongation factor Tu (398 aa).

The tr-type G domain occupies 10 to 207 (KPHVNIGTIG…TVDSYIPEPE (198 aa)). Residues 19–26 (GHVDHGKT) are G1. 19-26 (GHVDHGKT) lines the GTP pocket. T26 contacts Mg(2+). The interval 63 to 67 (GITIN) is G2. The G3 stretch occupies residues 84–87 (DAPG). GTP contacts are provided by residues 84-88 (DAPGH) and 139-142 (NKVD). Residues 139–142 (NKVD) form a G4 region. The G5 stretch occupies residues 177 to 179 (SAL).

This sequence belongs to the TRAFAC class translation factor GTPase superfamily. Classic translation factor GTPase family. EF-Tu/EF-1A subfamily. As to quaternary structure, monomer.

It localises to the cytoplasm. The catalysed reaction is GTP + H2O = GDP + phosphate + H(+). Functionally, GTP hydrolase that promotes the GTP-dependent binding of aminoacyl-tRNA to the A-site of ribosomes during protein biosynthesis. The sequence is that of Elongation factor Tu from Streptococcus pyogenes serotype M1.